The following is an 86-amino-acid chain: MERTQRKVRVGKVVSDKMEKTIVVAVEMKVRHPLYHRTITQTKKFKAHDENNEAKIGDSVVIMETRPISKDKRWRLVEITERAVVL.

The protein belongs to the universal ribosomal protein uS17 family. In terms of assembly, part of the 30S ribosomal subunit.

In terms of biological role, one of the primary rRNA binding proteins, it binds specifically to the 5'-end of 16S ribosomal RNA. The polypeptide is Small ribosomal subunit protein uS17 (Desulfitobacterium hafniense (strain DSM 10664 / DCB-2)).